A 1497-amino-acid polypeptide reads, in one-letter code: DNA-directed RNA polymerase subunit beta' (1497 aa).

Zn(2+) is bound by residues Cys67, Cys69, Cys82, and Cys85. The Mg(2+) site is built by Asp499, Asp501, and Asp503. The Zn(2+) site is built by Cys867, Cys943, Cys950, and Cys953. Positions 1476 to 1497 (ESNATERVVEEPATREGFANER) are disordered. Residues 1482–1497 (RVVEEPATREGFANER) show a composition bias toward basic and acidic residues.

This sequence belongs to the RNA polymerase beta' chain family. As to quaternary structure, the RNAP catalytic core consists of 2 alpha, 1 beta, 1 beta' and 1 omega subunit. When a sigma factor is associated with the core the holoenzyme is formed, which can initiate transcription. Mg(2+) is required as a cofactor. The cofactor is Zn(2+).

The enzyme catalyses RNA(n) + a ribonucleoside 5'-triphosphate = RNA(n+1) + diphosphate. In terms of biological role, DNA-dependent RNA polymerase catalyzes the transcription of DNA into RNA using the four ribonucleoside triphosphates as substrates. The sequence is that of DNA-directed RNA polymerase subunit beta' from Pelodictyon phaeoclathratiforme (strain DSM 5477 / BU-1).